Here is a 154-residue protein sequence, read N- to C-terminus: Putative antiporter subunit mnhG2 (154 aa).

A run of 3 helical transmembrane segments spans residues 11 to 31 (IASI…IGIV), 51 to 71 (VLLT…FFSV), and 72 to 92 (RLLL…HLIS).

It belongs to the CPA3 antiporters (TC 2.A.63) subunit G family. May form a heterooligomeric complex that consists of seven subunits: mnhA2, mnhB2, mnhC2, mnhD2, mnhE2, mnhF2 and mnhG2.

Its subcellular location is the cell membrane. This is Putative antiporter subunit mnhG2 (mnhG2) from Staphylococcus epidermidis (strain ATCC 35984 / DSM 28319 / BCRC 17069 / CCUG 31568 / BM 3577 / RP62A).